We begin with the raw amino-acid sequence, 177 residues long: Negative modulator of initiation of replication (177 aa).

The protein belongs to the SeqA family. In terms of assembly, homodimer. Polymerizes to form helical filaments.

The protein localises to the cytoplasm. Negative regulator of replication initiation, which contributes to regulation of DNA replication and ensures that replication initiation occurs exactly once per chromosome per cell cycle. Binds to pairs of hemimethylated GATC sequences in the oriC region, thus preventing assembly of replication proteins and re-initiation at newly replicated origins. Repression is relieved when the region becomes fully methylated. This chain is Negative modulator of initiation of replication, found in Vibrio cholerae serotype O1 (strain ATCC 39315 / El Tor Inaba N16961).